The primary structure comprises 308 residues: Homeobox protein abdominal-A homolog (308 aa).

The homeobox DNA-binding region spans 138-197 (RRRGRQTYTRFQTLELEKEFHFNHYLTRRRRIEIAHALCLTERQIKIWFQNRRMKLKKEL). Residues 207–221 (ARREREEQDKMKNES) show a composition bias toward basic and acidic residues. The segment at 207–277 (ARREREEQDK…SGNLGSHLHH (71 aa)) is disordered. Residues 223–247 (KSAQQHHSQKQAQQEHTVVGSQQTS) show a composition bias toward low complexity. Over residues 248-269 (NGGGTGGGTGGSGGAGSGGSSG) the composition is skewed to gly residues.

The protein belongs to the Antp homeobox family.

The protein resides in the nucleus. Its function is as follows. Sequence-specific transcription factor which is part of a developmental regulatory system that provides cells with specific positional identities on the anterior-posterior axis. This is Homeobox protein abdominal-A homolog from Anopheles gambiae (African malaria mosquito).